The sequence spans 448 residues: Phosphoglucosamine mutase (448 aa).

The Phosphoserine intermediate role is filled by serine 104. The Mg(2+) site is built by serine 104, aspartate 243, aspartate 245, and aspartate 247. Serine 104 bears the Phosphoserine mark.

Belongs to the phosphohexose mutase family. Mg(2+) is required as a cofactor. Post-translationally, activated by phosphorylation.

It catalyses the reaction alpha-D-glucosamine 1-phosphate = D-glucosamine 6-phosphate. Functionally, catalyzes the conversion of glucosamine-6-phosphate to glucosamine-1-phosphate. The chain is Phosphoglucosamine mutase from Xylella fastidiosa (strain Temecula1 / ATCC 700964).